The primary structure comprises 196 residues: Fe/S biogenesis protein NfuA (196 aa).

Positions 154 and 157 each coordinate [4Fe-4S] cluster.

This sequence belongs to the NfuA family. In terms of assembly, homodimer. Requires [4Fe-4S] cluster as cofactor.

Involved in iron-sulfur cluster biogenesis. Binds a 4Fe-4S cluster, can transfer this cluster to apoproteins, and thereby intervenes in the maturation of Fe/S proteins. Could also act as a scaffold/chaperone for damaged Fe/S proteins. The protein is Fe/S biogenesis protein NfuA of Blochmanniella pennsylvanica (strain BPEN).